We begin with the raw amino-acid sequence, 333 residues long: Ribonucleoside-diphosphate reductase small chain B (333 aa).

Fe cation-binding residues include aspartate 76, glutamate 107, and histidine 110. Residue tyrosine 114 is part of the active site. Fe cation is bound by residues glutamate 169, glutamate 203, and histidine 206.

This sequence belongs to the ribonucleoside diphosphate reductase small chain family. In terms of assembly, heterodimer of a large and a small chain. The cofactor is Fe cation. As to expression, expressed in roots, rosette leaves, stems and flowers.

The protein localises to the cytoplasm. The catalysed reaction is a 2'-deoxyribonucleoside 5'-diphosphate + [thioredoxin]-disulfide + H2O = a ribonucleoside 5'-diphosphate + [thioredoxin]-dithiol. In terms of biological role, provides the precursors necessary for DNA synthesis. Catalyzes the biosynthesis of deoxyribonucleotides from the corresponding ribonucleotides. The chain is Ribonucleoside-diphosphate reductase small chain B (RNR2B) from Arabidopsis thaliana (Mouse-ear cress).